The chain runs to 431 residues: Serine--tRNA ligase (431 aa).

L-serine is bound at residue 237 to 239 (TAE). 268 to 270 (RSE) lines the ATP pocket. Glutamate 291 contacts L-serine. 355 to 358 (EISS) provides a ligand contact to ATP. Serine 390 contributes to the L-serine binding site.

It belongs to the class-II aminoacyl-tRNA synthetase family. Type-1 seryl-tRNA synthetase subfamily. In terms of assembly, homodimer. The tRNA molecule binds across the dimer.

The protein localises to the cytoplasm. It catalyses the reaction tRNA(Ser) + L-serine + ATP = L-seryl-tRNA(Ser) + AMP + diphosphate + H(+). It carries out the reaction tRNA(Sec) + L-serine + ATP = L-seryl-tRNA(Sec) + AMP + diphosphate + H(+). It participates in aminoacyl-tRNA biosynthesis; selenocysteinyl-tRNA(Sec) biosynthesis; L-seryl-tRNA(Sec) from L-serine and tRNA(Sec): step 1/1. Catalyzes the attachment of serine to tRNA(Ser). Is also able to aminoacylate tRNA(Sec) with serine, to form the misacylated tRNA L-seryl-tRNA(Sec), which will be further converted into selenocysteinyl-tRNA(Sec). The sequence is that of Serine--tRNA ligase from Neisseria meningitidis serogroup C (strain 053442).